Consider the following 569-residue polypeptide: Proline--tRNA ligase (569 aa).

It belongs to the class-II aminoacyl-tRNA synthetase family. ProS type 1 subfamily. In terms of assembly, homodimer.

The protein localises to the cytoplasm. The catalysed reaction is tRNA(Pro) + L-proline + ATP = L-prolyl-tRNA(Pro) + AMP + diphosphate. Functionally, catalyzes the attachment of proline to tRNA(Pro) in a two-step reaction: proline is first activated by ATP to form Pro-AMP and then transferred to the acceptor end of tRNA(Pro). As ProRS can inadvertently accommodate and process non-cognate amino acids such as alanine and cysteine, to avoid such errors it has two additional distinct editing activities against alanine. One activity is designated as 'pretransfer' editing and involves the tRNA(Pro)-independent hydrolysis of activated Ala-AMP. The other activity is designated 'posttransfer' editing and involves deacylation of mischarged Ala-tRNA(Pro). The misacylated Cys-tRNA(Pro) is not edited by ProRS. The polypeptide is Proline--tRNA ligase (Levilactobacillus brevis (strain ATCC 367 / BCRC 12310 / CIP 105137 / JCM 1170 / LMG 11437 / NCIMB 947 / NCTC 947) (Lactobacillus brevis)).